A 181-amino-acid chain; its full sequence is ATP synthase subunit delta (181 aa).

It belongs to the ATPase delta chain family. As to quaternary structure, F-type ATPases have 2 components, F(1) - the catalytic core - and F(0) - the membrane proton channel. F(1) has five subunits: alpha(3), beta(3), gamma(1), delta(1), epsilon(1). F(0) has three main subunits: a(1), b(2) and c(10-14). The alpha and beta chains form an alternating ring which encloses part of the gamma chain. F(1) is attached to F(0) by a central stalk formed by the gamma and epsilon chains, while a peripheral stalk is formed by the delta and b chains.

It localises to the cell inner membrane. Functionally, f(1)F(0) ATP synthase produces ATP from ADP in the presence of a proton or sodium gradient. F-type ATPases consist of two structural domains, F(1) containing the extramembraneous catalytic core and F(0) containing the membrane proton channel, linked together by a central stalk and a peripheral stalk. During catalysis, ATP synthesis in the catalytic domain of F(1) is coupled via a rotary mechanism of the central stalk subunits to proton translocation. In terms of biological role, this protein is part of the stalk that links CF(0) to CF(1). It either transmits conformational changes from CF(0) to CF(1) or is implicated in proton conduction. This is ATP synthase subunit delta from Chlorobaculum tepidum (strain ATCC 49652 / DSM 12025 / NBRC 103806 / TLS) (Chlorobium tepidum).